Reading from the N-terminus, the 208-residue chain is Outer-membrane lipoprotein carrier protein (208 aa).

The first 22 residues, 1–22 (MRKTLSILAISLPLLVSGYAQA), serve as a signal peptide directing secretion.

The protein belongs to the LolA family. As to quaternary structure, monomer.

It is found in the periplasm. Functionally, participates in the translocation of lipoproteins from the inner membrane to the outer membrane. Only forms a complex with a lipoprotein if the residue after the N-terminal Cys is not an aspartate (The Asp acts as a targeting signal to indicate that the lipoprotein should stay in the inner membrane). This chain is Outer-membrane lipoprotein carrier protein, found in Shewanella sediminis (strain HAW-EB3).